The primary structure comprises 261 residues: Cytochrome c oxidase subunit 3 (261 aa).

At 1–15 (MTHQTHAYHMVNPSP) the chain is on the mitochondrial matrix side. A helical membrane pass occupies residues 16-34 (WPLTGALSALLMTSGLIMW). Residues 35-40 (FHYNSM) are Mitochondrial intermembrane-facing. The chain crosses the membrane as a helical span at residues 41–66 (ALLTLGFTTNLLTMYQWWRDVIREGT). The Mitochondrial matrix portion of the chain corresponds to 67-72 (FQGHHT). The chain crosses the membrane as a helical span at residues 73–105 (PIVQKGLRYGMVLFIVSEVFFFAGFFWAFYHSS). Residues 106-128 (LAPTPELGGCWPPTGIIPLNPLE) lie on the Mitochondrial intermembrane side of the membrane. The chain crosses the membrane as a helical span at residues 129–152 (VPLLNTSVLLASGVSITWAHHSLM). At 153 to 155 (EGN) the chain is on the mitochondrial matrix side. The helical transmembrane segment at 156–183 (RKHMLQALFITISLGVYFTLLQASEYYE) threads the bilayer. Topologically, residues 184-190 (TSFTISD) are mitochondrial intermembrane. Residues 191–223 (GVYGSTFFMATGFHGLHVIIGSTFLIVCFLRQL) traverse the membrane as a helical segment. Over 224–232 (YYHFTSNHH) the chain is Mitochondrial matrix. The helical transmembrane segment at 233 to 256 (FGFEAAAWYWHFVDVVWLFLYVSI) threads the bilayer. At 257–261 (YWWGS) the chain is on the mitochondrial intermembrane side.

This sequence belongs to the cytochrome c oxidase subunit 3 family. In terms of assembly, component of the cytochrome c oxidase (complex IV, CIV), a multisubunit enzyme composed of 14 subunits. The complex is composed of a catalytic core of 3 subunits MT-CO1, MT-CO2 and MT-CO3, encoded in the mitochondrial DNA, and 11 supernumerary subunits COX4I, COX5A, COX5B, COX6A, COX6B, COX6C, COX7A, COX7B, COX7C, COX8 and NDUFA4, which are encoded in the nuclear genome. The complex exists as a monomer or a dimer and forms supercomplexes (SCs) in the inner mitochondrial membrane with NADH-ubiquinone oxidoreductase (complex I, CI) and ubiquinol-cytochrome c oxidoreductase (cytochrome b-c1 complex, complex III, CIII), resulting in different assemblies (supercomplex SCI(1)III(2)IV(1) and megacomplex MCI(2)III(2)IV(2)).

It is found in the mitochondrion inner membrane. It catalyses the reaction 4 Fe(II)-[cytochrome c] + O2 + 8 H(+)(in) = 4 Fe(III)-[cytochrome c] + 2 H2O + 4 H(+)(out). Its function is as follows. Component of the cytochrome c oxidase, the last enzyme in the mitochondrial electron transport chain which drives oxidative phosphorylation. The respiratory chain contains 3 multisubunit complexes succinate dehydrogenase (complex II, CII), ubiquinol-cytochrome c oxidoreductase (cytochrome b-c1 complex, complex III, CIII) and cytochrome c oxidase (complex IV, CIV), that cooperate to transfer electrons derived from NADH and succinate to molecular oxygen, creating an electrochemical gradient over the inner membrane that drives transmembrane transport and the ATP synthase. Cytochrome c oxidase is the component of the respiratory chain that catalyzes the reduction of oxygen to water. Electrons originating from reduced cytochrome c in the intermembrane space (IMS) are transferred via the dinuclear copper A center (CU(A)) of subunit 2 and heme A of subunit 1 to the active site in subunit 1, a binuclear center (BNC) formed by heme A3 and copper B (CU(B)). The BNC reduces molecular oxygen to 2 water molecules using 4 electrons from cytochrome c in the IMS and 4 protons from the mitochondrial matrix. In Canis lupus familiaris (Dog), this protein is Cytochrome c oxidase subunit 3 (MT-CO3).